The chain runs to 440 residues: Thymidine phosphorylase (440 aa).

The protein belongs to the thymidine/pyrimidine-nucleoside phosphorylase family. Homodimer.

The enzyme catalyses thymidine + phosphate = 2-deoxy-alpha-D-ribose 1-phosphate + thymine. The protein operates within pyrimidine metabolism; dTMP biosynthesis via salvage pathway; dTMP from thymine: step 1/2. Functionally, the enzymes which catalyze the reversible phosphorolysis of pyrimidine nucleosides are involved in the degradation of these compounds and in their utilization as carbon and energy sources, or in the rescue of pyrimidine bases for nucleotide synthesis. This is Thymidine phosphorylase from Burkholderia pseudomallei (strain K96243).